Reading from the N-terminus, the 340-residue chain is Anthocyanidin reductase (340 aa).

2 residues coordinate NADP(+): K49 and Y169.

This sequence belongs to the NAD(P)-dependent epimerase/dehydratase family. Dihydroflavonol-4-reductase subfamily. Homo- or heterodimer. Flowers and young siliques. Detected specifically in the endothelium of seed coat.

The catalysed reaction is a (2R,3R)-flavan-3-ol + 2 NAD(+) = an anthocyanidin with a 3-hydroxy group + 2 NADH + 2 H(+). It carries out the reaction a (2R,3R)-flavan-3-ol + 2 NADP(+) = an anthocyanidin with a 3-hydroxy group + 2 NADPH + 2 H(+). It functions in the pathway secondary metabolite biosynthesis; flavonoid biosynthesis. Inhibited by (+)-catechin, quercetin and (+)- and (-)-dihydroquercetin. Not inhibited by salt. Positive cooperativity with NADPH acting as cosubstrate and modulator. Involved in the biosynthesis of condensed tannins. Converts cyanidin into (-)-epicatechin as the major product. This chain is Anthocyanidin reductase (BAN), found in Arabidopsis thaliana (Mouse-ear cress).